Consider the following 363-residue polypeptide: Ethanol acetyltransferase 1 (363 aa).

Residues 1-19 (MLLAYTVRPSNWSFTRRAY) constitute a mitochondrion transit peptide. The AB hydrolase-1 domain maps to 65 to 164 (PIIFYHGLLG…FSAACIIDNS (100 aa)). Catalysis depends on charge relay system residues Ser-138, Asp-162, and His-313.

It belongs to the AB hydrolase superfamily.

It is found in the mitochondrion. The enzyme catalyses ethanol + acetyl-CoA = ethyl acetate + CoA. The catalysed reaction is acetyl-CoA + H2O = acetate + CoA + H(+). It catalyses the reaction ethyl acetate + H2O = ethanol + acetate + H(+). Alcohol acetyltransferase that catalyzes the synthesis of ethyl acetate from ethanol and acetyl-CoA. Can also function as a thioesterase by hydrolyzing acetyl-CoA in the absence of ethanol, as well as esterase hydrolyzing ethyl acetate. The protein is Ethanol acetyltransferase 1 (EAT1) of Kluyveromyces marxianus (strain DMKU3-1042 / BCC 29191 / NBRC 104275) (Yeast).